An 834-amino-acid polypeptide reads, in one-letter code: Periplasmic nitrate reductase (834 aa).

The segment at residues 1 to 32 is a signal peptide (tat-type signal); the sequence is MTEPKIDRRQLLKLEAAAIAAAAAGMPTVARA. In terms of domain architecture, 4Fe-4S Mo/W bis-MGD-type spans 44 to 100; it reads LKWDKAACRFCGTGCSVMVATKDNRVVATHGDIKAEVNRGLNCVKGYFLSKIMYGHD. Positions 51, 54, 58, and 86 each coordinate [4Fe-4S] cluster. Residues Lys88, Gln155, Asn180, Cys184, 217 to 224, 248 to 252, 267 to 269, Met378, Gln382, Asn488, 514 to 515, Lys537, Asp564, and 724 to 733 contribute to the Mo-bis(molybdopterin guanine dinucleotide) site; these read WGSNMAEM, STFEH, QTD, SD, and TGRVVEHWHS. Residue Trp800 participates in substrate binding. Mo-bis(molybdopterin guanine dinucleotide) contacts are provided by Asn808 and Lys825.

Belongs to the prokaryotic molybdopterin-containing oxidoreductase family. NasA/NapA/NarB subfamily. In terms of assembly, component of the periplasmic nitrate reductase NapAB complex composed of NapA and NapB. [4Fe-4S] cluster is required as a cofactor. Mo-bis(molybdopterin guanine dinucleotide) serves as cofactor. Post-translationally, predicted to be exported by the Tat system. The position of the signal peptide cleavage has not been experimentally proven.

It localises to the periplasm. It carries out the reaction 2 Fe(II)-[cytochrome] + nitrate + 2 H(+) = 2 Fe(III)-[cytochrome] + nitrite + H2O. Its function is as follows. Catalytic subunit of the periplasmic nitrate reductase complex NapAB. Receives electrons from NapB and catalyzes the reduction of nitrate to nitrite. The chain is Periplasmic nitrate reductase from Bradyrhizobium sp. (strain ORS 278).